The chain runs to 396 residues: Elongation factor Tu 2 (396 aa).

Residues Lys10–Asp206 enclose the tr-type G domain. A G1 region spans residues Gly19–Thr26. Residue Gly19–Thr26 participates in GTP binding. Residue Thr26 participates in Mg(2+) binding. Positions Gly60–Asn64 are G2. The segment at Asp81–Gly84 is G3. GTP contacts are provided by residues Asp81–His85 and Asn136–Asp139. Positions Asn136–Asp139 are G4. The G5 stretch occupies residues Ser174 to Lys176.

The protein belongs to the TRAFAC class translation factor GTPase superfamily. Classic translation factor GTPase family. EF-Tu/EF-1A subfamily. In terms of assembly, monomer.

The protein resides in the cytoplasm. The catalysed reaction is GTP + H2O = GDP + phosphate + H(+). In terms of biological role, GTP hydrolase that promotes the GTP-dependent binding of aminoacyl-tRNA to the A-site of ribosomes during protein biosynthesis. The sequence is that of Elongation factor Tu 2 from Caulobacter sp. (strain K31).